An 887-amino-acid polypeptide reads, in one-letter code: 3-hydroxy-3-methylglutaryl-coenzyme A reductase (887 aa).

Over 1 to 9 the chain is Cytoplasmic; that stretch reads MLSRLFRMH. A helical transmembrane segment spans residues 10–39; the sequence is GLFVASHPWEVIVGTVTLTICMMSMNMFTG. The Lumenal segment spans residues 40-56; the sequence is NNKICGWNYECPKFEED. Residues 57 to 78 traverse the membrane as a helical segment; the sequence is VLSSDIIILTITRCIAILYIYF. The region spanning 61–218 is the SSD domain; sequence DIIILTITRC…MTFFPACVSL (158 aa). Positions 75-78 match the INSIG-binding motif motif; sequence YIYF. The Cytoplasmic portion of the chain corresponds to 79–89; sequence QFQNLRQLGSK. A Glycyl lysine isopeptide (Lys-Gly) (interchain with G-Cter in ubiquitin) cross-link involves residue lysine 89. Residues 90 to 114 form a helical membrane-spanning segment; it reads YILGIAGLFTIFSSFVFSTVVIHFL. Residues 115–123 lie on the Lumenal side of the membrane; it reads DKELTGLNE. A helical membrane pass occupies residues 124-149; that stretch reads ALPFFLLLIDLSRASALAKFALSSNS. Topologically, residues 150 to 159 are cytoplasmic; sequence QDEVRENIAR. Residues 160 to 187 form a helical membrane-spanning segment; that stretch reads GMAILGPTFTLDALVECLVIGVGTMSGV. Topologically, residues 188–191 are lumenal; sequence RQLE. The chain crosses the membrane as a helical span at residues 192 to 220; the sequence is IMCCFGCMSVLANYFVFMTFFPACVSLVL. Residues 221 to 248 are Cytoplasmic-facing; the sequence is ELSRESREGRPIWQLSHFARVLEEEENK. Lysine 248 participates in a covalent cross-link: Glycyl lysine isopeptide (Lys-Gly) (interchain with G-Cter in ubiquitin). Residues 249–275 form a helical membrane-spanning segment; the sequence is PNPVTQRVKMIMSLGLVLVHAHSRWIA. Residues 276-314 lie on the Lumenal side of the membrane; it reads DPSPQNSTTEHSKVSLGLDEDVSKRIEPSVSLWQFYLSK. Residue asparagine 281 is glycosylated (N-linked (GlcNAc...) asparagine). Residues 315–339 form a helical membrane-spanning segment; sequence MISMDIEQVVTLSLAFLLAVKYIFF. Residues 340–887 are Cytoplasmic-facing; the sequence is EQAETESTLS…LQGTCTKKAA (548 aa). Residues glutamate 558, lysine 690, and aspartate 766 each act as charge relay system in the active site. Catalysis depends on histidine 865, which acts as the Proton donor. Serine 871 is subject to Phosphoserine; by AMPK.

Belongs to the HMG-CoA reductase family. As to quaternary structure, homotetramer. Homodimer. Interacts (via its SSD) with INSIG1; the interaction, accelerated by sterols, leads to the recruitment of HMGCR to AMFR/gp78 for its ubiquitination by the sterol-mediated ERAD pathway. Interacts with UBIAD1. In terms of processing, undergoes sterol-mediated ubiquitination and ER-associated degradation (ERAD). Accumulation of sterols in the endoplasmic reticulum (ER) membrane, triggers binding of the reductase to the ER membrane protein INSIG1 or INSIG2. The INSIG1 binding leads to the recruitment of the ubiquitin ligase, AMFR/gp78, RNF139 or RNF145, initiating ubiquitination of the reductase. The ubiquitinated reductase is then extracted from the ER membrane and delivered to cytosolic 26S proteosomes by a mechanism probably mediated by the ATPase Valosin-containing protein VCP/p97. The INSIG2-binding leads to the recruitment of the ubiquitin ligase RNF139, initiating ubiquitination of the reductase. Lys-248 is the main site of ubiquitination. Ubiquitination is enhanced by the presence of a geranylgeranylated protein. Post-translationally, N-glycosylated. Deglycosylated by NGLY1 on release from the endoplasmic reticulum (ER) in a sterol-mediated manner. Phosphorylated. Phosphorylation at Ser-871 reduces the catalytic activity.

The protein resides in the endoplasmic reticulum membrane. It is found in the peroxisome membrane. It carries out the reaction (R)-mevalonate + 2 NADP(+) + CoA = (3S)-3-hydroxy-3-methylglutaryl-CoA + 2 NADPH + 2 H(+). The protein operates within metabolic intermediate biosynthesis; (R)-mevalonate biosynthesis; (R)-mevalonate from acetyl-CoA: step 3/3. With respect to regulation, regulated by a negative feedback mechanism through sterols and non-sterol metabolites derived from mevalonate. Phosphorylation at Ser-871 down-regulates the catalytic activity. Catalyzes the conversion of (3S)-hydroxy-3-methylglutaryl-CoA (HMG-CoA) to mevalonic acid, the rate-limiting step in the synthesis of cholesterol and other isoprenoids, thus plays a critical role in cellular cholesterol homeostasis. In Mesocricetus auratus (Golden hamster), this protein is 3-hydroxy-3-methylglutaryl-coenzyme A reductase (HMGCR).